Here is a 100-residue protein sequence, read N- to C-terminus: UPF0213 protein YhbQ (100 aa).

The region spanning Thr2–Arg77 is the GIY-YIG domain.

This sequence belongs to the UPF0213 family.

The chain is UPF0213 protein YhbQ from Escherichia coli (strain K12 / MC4100 / BW2952).